Reading from the N-terminus, the 179-residue chain is Ribulose bisphosphate carboxylase small subunit, chloroplastic 2 (179 aa).

A chloroplast-targeting transit peptide spans 1 to 58; sequence MASSATMLSSVATAACVAPAQASMVAPFVGLKSASAFPVTQKTVTGLSTLPSNGGRVQ.

The protein belongs to the RuBisCO small chain family. Heterohexadecamer of 8 large and 8 small subunits.

The protein localises to the plastid. The protein resides in the chloroplast. Functionally, ruBisCO catalyzes two reactions: the carboxylation of D-ribulose 1,5-bisphosphate, the primary event in carbon dioxide fixation, as well as the oxidative fragmentation of the pentose substrate. Both reactions occur simultaneously and in competition at the same active site. Although the small subunit is not catalytic it is essential for maximal activity. This Fritillaria agrestis (Stinkbells) protein is Ribulose bisphosphate carboxylase small subunit, chloroplastic 2.